Consider the following 256-residue polypeptide: UPF0644 protein PB2B4.06 (256 aa).

The chain crosses the membrane as a helical span at residues 34–56; the sequence is GVVYAGVSGTCAAAGYMFGNFVM.

It belongs to the UPF0644 family.

It localises to the mitochondrion membrane. This is UPF0644 protein PB2B4.06 from Schizosaccharomyces pombe (strain 972 / ATCC 24843) (Fission yeast).